The sequence spans 211 residues: LexA repressor (211 aa).

Positions 29–49 (VREICTAVGLRSTSTVHSHLN) form a DNA-binding region, H-T-H motif. Active-site for autocatalytic cleavage activity residues include Ser131 and Lys169.

Belongs to the peptidase S24 family. In terms of assembly, homodimer.

The enzyme catalyses Hydrolysis of Ala-|-Gly bond in repressor LexA.. Functionally, represses a number of genes involved in the response to DNA damage (SOS response), including recA and lexA. In the presence of single-stranded DNA, RecA interacts with LexA causing an autocatalytic cleavage which disrupts the DNA-binding part of LexA, leading to derepression of the SOS regulon and eventually DNA repair. The sequence is that of LexA repressor from Clostridioides difficile (strain 630) (Peptoclostridium difficile).